Reading from the N-terminus, the 235-residue chain is Type III pantothenate kinase (235 aa).

6-13 (DVGNTSLK) contributes to the ATP binding site. Substrate-binding positions include tyrosine 79 and 86-89 (GIDR). Aspartate 88 serves as the catalytic Proton acceptor. K(+) is bound at residue aspartate 109. Threonine 112 is a binding site for ATP. Threonine 164 provides a ligand contact to substrate.

It belongs to the type III pantothenate kinase family. As to quaternary structure, homodimer. NH4(+) serves as cofactor. K(+) is required as a cofactor.

The protein resides in the cytoplasm. It carries out the reaction (R)-pantothenate + ATP = (R)-4'-phosphopantothenate + ADP + H(+). It participates in cofactor biosynthesis; coenzyme A biosynthesis; CoA from (R)-pantothenate: step 1/5. Catalyzes the phosphorylation of pantothenate (Pan), the first step in CoA biosynthesis. This Pseudoalteromonas translucida (strain TAC 125) protein is Type III pantothenate kinase.